The chain runs to 44 residues: MRDLKTYLSVAPVISTLWFGSLAGLLIEINRFFPDALTFPFFSF.

Residues 7–27 form a helical membrane-spanning segment; that stretch reads YLSVAPVISTLWFGSLAGLLI.

It belongs to the PsaJ family.

The protein resides in the plastid. It localises to the chloroplast thylakoid membrane. Functionally, may help in the organization of the PsaE and PsaF subunits. This is Photosystem I reaction center subunit IX from Populus alba (White poplar).